A 242-amino-acid chain; its full sequence is Proteasome subunit alpha (242 aa).

It belongs to the peptidase T1A family. The 20S proteasome core is composed of 14 alpha and 14 beta subunits that assemble into four stacked heptameric rings, resulting in a barrel-shaped structure. The two inner rings, each composed of seven catalytic beta subunits, are sandwiched by two outer rings, each composed of seven alpha subunits. The catalytic chamber with the active sites is on the inside of the barrel. Has a gated structure, the ends of the cylinder being occluded by the N-termini of the alpha-subunits. Is capped at one or both ends by the proteasome regulatory ATPase, PAN.

The protein resides in the cytoplasm. With respect to regulation, the formation of the proteasomal ATPase PAN-20S proteasome complex, via the docking of the C-termini of PAN into the intersubunit pockets in the alpha-rings, triggers opening of the gate for substrate entry. Interconversion between the open-gate and close-gate conformations leads to a dynamic regulation of the 20S proteasome proteolysis activity. Component of the proteasome core, a large protease complex with broad specificity involved in protein degradation. This chain is Proteasome subunit alpha, found in Sulfolobus acidocaldarius (strain ATCC 33909 / DSM 639 / JCM 8929 / NBRC 15157 / NCIMB 11770).